Here is a 190-residue protein sequence, read N- to C-terminus: Bifunctional protein PyrR (190 aa).

Residues 107–119 (IILVDDVLYSGRT) carry the PRPP-binding motif.

This sequence belongs to the purine/pyrimidine phosphoribosyltransferase family. PyrR subfamily.

It catalyses the reaction UMP + diphosphate = 5-phospho-alpha-D-ribose 1-diphosphate + uracil. Regulates the transcription of the pyrimidine nucleotide (pyr) operon in response to exogenous pyrimidines. Its function is as follows. Also displays a weak uracil phosphoribosyltransferase activity which is not physiologically significant. This Corynebacterium diphtheriae (strain ATCC 700971 / NCTC 13129 / Biotype gravis) protein is Bifunctional protein PyrR.